A 691-amino-acid polypeptide reads, in one-letter code: Solute carrier family 28 member 3 (691 aa).

Residues 1-78 (MELRSTAAPR…HMEDDDEEMQ (78 aa)) are disordered. The Cytoplasmic segment spans residues 1 to 102 (MELRSTAAPR…FCRKHKTTLR (102 aa)). Low complexity predominate over residues 21–30 (NEENFLENEN). Positions 31–42 (TSGNNSIRSRAV) are enriched in polar residues. The span at 43–54 (QSREHTNTKQDE) shows a compositional bias: basic and acidic residues. A helical transmembrane segment spans residues 103 to 123 (HIIWGILLAGYLVMVISACVL). Topologically, residues 124 to 128 (NFHRA) are extracellular. A helical transmembrane segment spans residues 129 to 149 (LPLFVITVAAIFFVVWDHLMA). Residues 150-173 (KYEHRIDEMLSPGRRLLNSHWFWL) are Cytoplasmic-facing. The helical transmembrane segment at 174-194 (KWVIWSSLVLAVIFWLAFDTA) threads the bilayer. The Extracellular portion of the chain corresponds to 195 to 197 (KLG). A helical transmembrane segment spans residues 198-219 (QQQLVSFGGLIMYIVLLFLFSK). The Cytoplasmic portion of the chain corresponds to 220–227 (YPTRVYWR). The chain crosses the membrane as a helical span at residues 228–247 (PVLWGIGLQFLLGLLILRTD). Residues 248-284 (PGFIAFDWLGRQVQTFLEYTDAGASFVFGEKYKDHFF) are Extracellular-facing. The helical transmembrane segment at 285 to 305 (AFKVLPIVVFFSTVMSMLYYL) threads the bilayer. The Cytoplasmic segment spans residues 306-329 (GLMQWIIRKVGWIMLVTTGSSPIE). Residues 330–348 (SVVASGNIFVGQTESPLLV) constitute an intramembrane region (helical). Residues 349-361 (RPYLPYITKSELH) lie on the Cytoplasmic side of the membrane. A helical membrane pass occupies residues 362-384 (AIMTAGFSTIAGSVLGAYISFGV). At 385–386 (PS) the chain is on the extracellular side. Residues 387–408 (SHLLTASVMSAPASLAAAKLFW) traverse the membrane as a helical segment. Over 409-443 (PETEKPKITLKNAMKMESGDSGNLLEAATQGASSS) the chain is Cytoplasmic. The helical transmembrane segment at 444–469 (ISLVANIAVNLIAFLALLSFMNSALS) threads the bilayer. Residues 470–507 (WFGNMFDYPQLSFELICSYIFMPFSFMMGVEWQDSFMV) are Extracellular-facing. An intramembrane region (helical) is located at residues 508 to 527 (ARLIGYKTFFNEFVAYEHLS). Topologically, residues 528 to 566 (KWIHLRKEGGPKFVNGVQQYISIRSEIIATYALCGFANI) are extracellular. The helical transmembrane segment at 567–577 (GSLGIVIGGLT) threads the bilayer. Over 578–590 (SMAPSRKRDIASG) the chain is Cytoplasmic. The chain crosses the membrane as a helical span at residues 591 to 613 (AVRALIAGTVACFMTACIAGILS). Over 614-691 (STPVDINCHH…FNCNGISNTF (78 aa)) the chain is Extracellular.

It belongs to the concentrative nucleoside transporter (CNT) (TC 2.A.41) family. Homotrimer. Expressed in pancreas, bone marrow, trachea, mammary gland, liver, prostate, and regions of intestine, brain, lung, placenta, testis, kidney, and heart.

Its subcellular location is the cell membrane. It localises to the endoplasmic reticulum membrane. It catalyses the reaction thymidine(out) + 2 Na(+)(out) = thymidine(in) + 2 Na(+)(in). The catalysed reaction is cytidine(out) + 2 Na(+)(out) = cytidine(in) + 2 Na(+)(in). It carries out the reaction uridine(out) + 2 Na(+)(out) = uridine(in) + 2 Na(+)(in). The enzyme catalyses adenosine(out) + 2 Na(+)(out) = adenosine(in) + 2 Na(+)(in). It catalyses the reaction guanosine(out) + 2 Na(+)(out) = guanosine(in) + 2 Na(+)(in). The catalysed reaction is inosine(out) + 2 Na(+)(out) = inosine(in) + 2 Na(+)(in). Its function is as follows. Sodium-dependent, pyrimidine- and purine-selective. Involved in the homeostasis of endogenous nucleosides. Exhibits the transport characteristics of the nucleoside transport system cib or N3 subtype (N3/cib) (with marked transport of both thymidine and inosine). Employs a 2:1 sodium/nucleoside ratio. Transports uridine. Also able to transport gemcitabine, 3'-azido-3'-deoxythymidine (AZT), ribavirin and 3-deazauridine. This chain is Solute carrier family 28 member 3 (SLC28A3), found in Homo sapiens (Human).